Consider the following 353-residue polypeptide: DNA replication and repair protein RecF (353 aa).

Residue 30 to 37 (GANGQGKT) participates in ATP binding.

This sequence belongs to the RecF family.

It localises to the cytoplasm. Its function is as follows. The RecF protein is involved in DNA metabolism; it is required for DNA replication and normal SOS inducibility. RecF binds preferentially to single-stranded, linear DNA. It also seems to bind ATP. This is DNA replication and repair protein RecF from Carboxydothermus hydrogenoformans (strain ATCC BAA-161 / DSM 6008 / Z-2901).